A 224-amino-acid polypeptide reads, in one-letter code: Large ribosomal subunit protein uL4 (224 aa).

The disordered stretch occupies residues 53-74; it reads RNRSEVSHSTKKPFKQKGTGNA.

Belongs to the universal ribosomal protein uL4 family. In terms of assembly, part of the 50S ribosomal subunit.

Its function is as follows. One of the primary rRNA binding proteins, this protein initially binds near the 5'-end of the 23S rRNA. It is important during the early stages of 50S assembly. It makes multiple contacts with different domains of the 23S rRNA in the assembled 50S subunit and ribosome. Functionally, forms part of the polypeptide exit tunnel. The protein is Large ribosomal subunit protein uL4 of Chlamydia pneumoniae (Chlamydophila pneumoniae).